The following is a 183-amino-acid chain: A-type ATP synthase subunit E (183 aa).

It belongs to the V-ATPase E subunit family. Has multiple subunits with at least A(3), B(3), C, D, E, F, H, I and proteolipid K(x).

The protein localises to the cell membrane. Its function is as follows. Component of the A-type ATP synthase that produces ATP from ADP in the presence of a proton gradient across the membrane. In Methanosarcina barkeri (strain Fusaro / DSM 804), this protein is A-type ATP synthase subunit E.